We begin with the raw amino-acid sequence, 314 residues long: Ribosomal RNA small subunit methyltransferase H (314 aa).

Residues 35–37 (GGH), D54, F83, D104, and Q111 each bind S-adenosyl-L-methionine.

It belongs to the methyltransferase superfamily. RsmH family.

It is found in the cytoplasm. The enzyme catalyses cytidine(1402) in 16S rRNA + S-adenosyl-L-methionine = N(4)-methylcytidine(1402) in 16S rRNA + S-adenosyl-L-homocysteine + H(+). Its function is as follows. Specifically methylates the N4 position of cytidine in position 1402 (C1402) of 16S rRNA. The protein is Ribosomal RNA small subunit methyltransferase H of Oenococcus oeni (strain ATCC BAA-331 / PSU-1).